The sequence spans 93 residues: DNA-binding protein Fis (93 aa).

The H-T-H motif DNA-binding region spans 74–93 (QTRAAQMMGINRGTLRKKLK).

It belongs to the transcriptional regulatory Fis family. As to quaternary structure, homodimer.

Activates ribosomal RNA transcription. Plays a direct role in upstream activation of rRNA promoters. The polypeptide is DNA-binding protein Fis (Proteus vulgaris).